The sequence spans 396 residues: NADH-quinone oxidoreductase subunit D (396 aa).

The protein belongs to the complex I 49 kDa subunit family. NDH-1 is composed of 14 different subunits. Subunits NuoB, C, D, E, F, and G constitute the peripheral sector of the complex.

The protein localises to the cell inner membrane. The enzyme catalyses a quinone + NADH + 5 H(+)(in) = a quinol + NAD(+) + 4 H(+)(out). Its function is as follows. NDH-1 shuttles electrons from NADH, via FMN and iron-sulfur (Fe-S) centers, to quinones in the respiratory chain. The immediate electron acceptor for the enzyme in this species is believed to be ubiquinone. Couples the redox reaction to proton translocation (for every two electrons transferred, four hydrogen ions are translocated across the cytoplasmic membrane), and thus conserves the redox energy in a proton gradient. The protein is NADH-quinone oxidoreductase subunit D of Orientia tsutsugamushi (strain Ikeda) (Rickettsia tsutsugamushi).